Reading from the N-terminus, the 571-residue chain is Proline--tRNA ligase (571 aa).

This sequence belongs to the class-II aminoacyl-tRNA synthetase family. ProS type 1 subfamily. As to quaternary structure, homodimer.

The protein localises to the cytoplasm. The catalysed reaction is tRNA(Pro) + L-proline + ATP = L-prolyl-tRNA(Pro) + AMP + diphosphate. Catalyzes the attachment of proline to tRNA(Pro) in a two-step reaction: proline is first activated by ATP to form Pro-AMP and then transferred to the acceptor end of tRNA(Pro). As ProRS can inadvertently accommodate and process non-cognate amino acids such as alanine and cysteine, to avoid such errors it has two additional distinct editing activities against alanine. One activity is designated as 'pretransfer' editing and involves the tRNA(Pro)-independent hydrolysis of activated Ala-AMP. The other activity is designated 'posttransfer' editing and involves deacylation of mischarged Ala-tRNA(Pro). The misacylated Cys-tRNA(Pro) is not edited by ProRS. The protein is Proline--tRNA ligase of Pseudomonas aeruginosa (strain LESB58).